A 353-amino-acid polypeptide reads, in one-letter code: Protein RecA (353 aa).

An ATP-binding site is contributed by 68–75; that stretch reads GPESSGKT.

It belongs to the RecA family.

It is found in the cytoplasm. In terms of biological role, can catalyze the hydrolysis of ATP in the presence of single-stranded DNA, the ATP-dependent uptake of single-stranded DNA by duplex DNA, and the ATP-dependent hybridization of homologous single-stranded DNAs. It interacts with LexA causing its activation and leading to its autocatalytic cleavage. The chain is Protein RecA from Roseiflexus castenholzii (strain DSM 13941 / HLO8).